The chain runs to 420 residues: Vacuolar amino acid transporter 5 (420 aa).

The Cytoplasmic portion of the chain corresponds to 1-19; sequence MSGYSPLSSGPADVHIGKA. The chain crosses the membrane as a helical span at residues 20–40; the sequence is GFFSSVINLANTILGAGILSL. The Vacuolar portion of the chain corresponds to 41–49; the sequence is PNAFTKTGL. The helical transmembrane segment at 50 to 70 threads the bilayer; that stretch reads LFGCLTIVFSAFASFLGLYFV. Over 71-96 the chain is Cytoplasmic; that stretch reads SQCAARLPRGKASFAAVAKHTFPSLA. Residues 97-117 form a helical membrane-spanning segment; the sequence is VVFDASIAVKCFGVAVSYLVI. Topologically, residues 118-141 are vacuolar; that stretch reads VGDLMPQIAPSLGLSSPMFLRRQT. Residues 142–162 form a helical membrane-spanning segment; it reads WIVFALFVLTPLSFLKRLDSL. Residues 163–166 lie on the Cytoplasmic side of the membrane; that stretch reads RHTS. The chain crosses the membrane as a helical span at residues 167–187; the sequence is VISLIALCYLVFIVLYHFIIG. Over 188–195 the chain is Vacuolar; that stretch reads DTVKGEIR. The helical transmembrane segment at 196 to 216 threads the bilayer; sequence YFVPESGFGYLSVLPVFVFGF. Residues 217 to 240 lie on the Cytoplasmic side of the membrane; that stretch reads TCHQNAFSVINEVRNFSQGFVNFT. The chain crosses the membrane as a helical span at residues 241-261; that stretch reads MFTAIISSTLLYLLVAITGYL. Residues 262–278 lie on the Vacuolar side of the membrane; sequence SFGSLASGNIIAMYDNT. Residues 279–299 form a helical membrane-spanning segment; the sequence is SIWIIGGKLAIVVLVLFSYPL. Over 300 to 326 the chain is Cytoplasmic; it reads QCHPCRNSVYQAIRRSYSAHDMSDGYH. Residues 327-347 form a helical membrane-spanning segment; the sequence is AVITLCILLFTHSLALLLSSL. Residues 348–349 lie on the Vacuolar side of the membrane; it reads EM. The helical transmembrane segment at 350–370 threads the bilayer; that stretch reads VLAFVGSTGSTFISFILPGSL. Residues 371–394 lie on the Cytoplasmic side of the membrane; sequence YYFFSHKVASPGNSSPLQLRISRA. Residues 395-415 form a helical membrane-spanning segment; that stretch reads FAAGLAIYGTVVMILCLNINI. Topologically, residues 416–420 are vacuolar; sequence AKLSH.

This sequence belongs to the amino acid/polyamine transporter 2 family.

Its subcellular location is the vacuole membrane. Its function is as follows. Vacuolar amino acid transporter involved in the vacuolar uptake of histidine, glutamate, tyrosine, arginine, lysine, and serine. Required for sporulation. This chain is Vacuolar amino acid transporter 5 (avt5), found in Schizosaccharomyces pombe (strain 972 / ATCC 24843) (Fission yeast).